Here is a 69-residue protein sequence, read N- to C-terminus: Small, acid-soluble spore protein I (69 aa).

It belongs to the SspI family.

The protein localises to the spore core. The polypeptide is Small, acid-soluble spore protein I (Bacillus cereus (strain G9842)).